Reading from the N-terminus, the 204-residue chain is UPF0637 protein USA300HOU_1046.1 (204 aa).

It belongs to the UPF0637 family.

The chain is UPF0637 protein USA300HOU_1046.1 from Staphylococcus aureus (strain USA300 / TCH1516).